The sequence spans 220 residues: Small ribosomal subunit protein uS3 (220 aa).

Positions 38–106 (IRKYVKGRLK…RVHININEIK (69 aa)) constitute a KH type-2 domain.

It belongs to the universal ribosomal protein uS3 family. As to quaternary structure, part of the 30S ribosomal subunit. Forms a tight complex with proteins S10 and S14.

In terms of biological role, binds the lower part of the 30S subunit head. Binds mRNA in the 70S ribosome, positioning it for translation. The sequence is that of Small ribosomal subunit protein uS3 from Brevibacillus brevis (strain 47 / JCM 6285 / NBRC 100599).